Consider the following 217-residue polypeptide: Translation initiation factor IF-3 (217 aa).

The disordered stretch occupies residues 170–217 (KKTEAMAEARQAQEARKADAKANPGKSQNAAETDDAEAEAPAEAPAEA). A compositionally biased stretch (basic and acidic residues) spans 172–189 (TEAMAEARQAQEARKADA).

This sequence belongs to the IF-3 family. Monomer.

It localises to the cytoplasm. In terms of biological role, IF-3 binds to the 30S ribosomal subunit and shifts the equilibrium between 70S ribosomes and their 50S and 30S subunits in favor of the free subunits, thus enhancing the availability of 30S subunits on which protein synthesis initiation begins. The chain is Translation initiation factor IF-3 from Streptomyces coelicolor (strain ATCC BAA-471 / A3(2) / M145).